A 1240-amino-acid chain; its full sequence is RNA-directed RNA polymerase VP2 (1240 aa).

Residues L516 to I764 form the RdRp catalytic domain.

It belongs to the reoviridae RNA-directed RNA polymerase family.

It is found in the virion. The enzyme catalyses RNA(n) + a ribonucleoside 5'-triphosphate = RNA(n+1) + diphosphate. In terms of biological role, RNA-directed RNA polymerase that is involved in transcription and genome replication. Following infection, it catalyzes the synthesis of fully conservative plus strands. After core assembly, which consists in recruitment of one capped plus-strand for each genomic segments and polymerase complexes, the polymerase switches mode and catalyzes the synthesis of complementary minus-strands. In Oncorhynchus keta (Chum salmon), this protein is RNA-directed RNA polymerase VP2 (S2).